The following is a 183-amino-acid chain: Dual-action ribosomal maturation protein DarP (183 aa).

The segment at 1–23 (MTKQPDDWLDEVPDNENDDDDDE) is disordered. The span at 7 to 23 (DWLDEVPDNENDDDDDE) shows a compositional bias: acidic residues.

Belongs to the DarP family.

The protein localises to the cytoplasm. Its function is as follows. Member of a network of 50S ribosomal subunit biogenesis factors which assembles along the 30S-50S interface, preventing incorrect 23S rRNA structures from forming. Promotes peptidyl transferase center (PTC) maturation. In Cronobacter sakazakii (strain ATCC BAA-894) (Enterobacter sakazakii), this protein is Dual-action ribosomal maturation protein DarP.